Reading from the N-terminus, the 187-residue chain is uncharacterized protein (187 aa).

This is an uncharacterized protein from Acanthamoeba polyphaga mimivirus (APMV).